Here is a 348-residue protein sequence, read N- to C-terminus: Anthranilate phosphoribosyltransferase (348 aa).

5-phospho-alpha-D-ribose 1-diphosphate contacts are provided by residues Gly81, 84 to 85 (GD), 91 to 94 (NVST), 109 to 117 (KHGNRAVSG), and Ser121. Gly81 is an anthranilate binding site. Ser93 is a binding site for Mg(2+). Asn112 is a binding site for anthranilate. Anthranilate is bound at residue Arg167. Positions 226 and 227 each coordinate Mg(2+).

This sequence belongs to the anthranilate phosphoribosyltransferase family. Homodimer. The cofactor is Mg(2+).

The catalysed reaction is N-(5-phospho-beta-D-ribosyl)anthranilate + diphosphate = 5-phospho-alpha-D-ribose 1-diphosphate + anthranilate. The protein operates within amino-acid biosynthesis; L-tryptophan biosynthesis; L-tryptophan from chorismate: step 2/5. Its function is as follows. Catalyzes the transfer of the phosphoribosyl group of 5-phosphorylribose-1-pyrophosphate (PRPP) to anthranilate to yield N-(5'-phosphoribosyl)-anthranilate (PRA). The polypeptide is Anthranilate phosphoribosyltransferase (Ectopseudomonas mendocina (strain ymp) (Pseudomonas mendocina)).